We begin with the raw amino-acid sequence, 92 residues long: Small ribosomal subunit protein uS19c (92 aa).

The protein belongs to the universal ribosomal protein uS19 family.

It localises to the plastid. The protein resides in the chloroplast. Functionally, protein S19 forms a complex with S13 that binds strongly to the 16S ribosomal RNA. The sequence is that of Small ribosomal subunit protein uS19c from Cycas taitungensis (Prince sago).